The chain runs to 258 residues: Malonyl-[acyl-carrier protein] O-methyltransferase (258 aa).

Belongs to the methyltransferase superfamily.

The enzyme catalyses malonyl-[ACP] + S-adenosyl-L-methionine = malonyl-[ACP] methyl ester + S-adenosyl-L-homocysteine. The protein operates within cofactor biosynthesis; biotin biosynthesis. Functionally, converts the free carboxyl group of a malonyl-thioester to its methyl ester by transfer of a methyl group from S-adenosyl-L-methionine (SAM). It allows to synthesize pimeloyl-ACP via the fatty acid synthetic pathway. This chain is Malonyl-[acyl-carrier protein] O-methyltransferase, found in Hamiltonella defensa subsp. Acyrthosiphon pisum (strain 5AT).